A 389-amino-acid chain; its full sequence is Trans-2-enoyl-CoA reductase [NADH] (389 aa).

Residues 47–52 (GASTGY), 73–74 (FE), 110–111 (DA), and 138–139 (LA) each bind NAD(+). Residue tyrosine 224 coordinates substrate. Tyrosine 234 functions as the Proton donor in the catalytic mechanism. NAD(+)-binding positions include lysine 243 and 272-274 (LVT).

The protein belongs to the TER reductase family. Monomer.

The enzyme catalyses a 2,3-saturated acyl-CoA + NAD(+) = a (2E)-enoyl-CoA + NADH + H(+). Its pathway is lipid metabolism; fatty acid biosynthesis. Involved in the fatty acid synthesis (FAS II). Catalyzes the reduction of a carbon-carbon double bond in an enoyl moiety that is covalently linked to a coenzyme A (CoA). The chain is Trans-2-enoyl-CoA reductase [NADH] from Clostridium perfringens (strain SM101 / Type A).